Reading from the N-terminus, the 1026-residue chain is Chromodomain-helicase-DNA-binding protein 1-like (1026 aa).

The Helicase ATP-binding domain maps to 47-212 (SLCMKNQQGC…YSLLTFIQPS (166 aa)). Residue 60–67 (DEMGLGKT) participates in ATP binding. The short motif at 163 to 166 (DEAH) is the DEAH box element. A Helicase C-terminal domain is found at 340-494 (LLDSMLAYLQ…EGRFSLLDQA (155 aa)). A coiled-coil region spans residues 540-668 (LTDEEHAKLN…EELNYKKKMA (129 aa)). The segment at 594–628 (AEMEDAEKEGRALRNKAGVSLSGPLINPARKKRPL) is regulatory linker segment (RLS). The disordered stretch occupies residues 606-655 (LRNKAGVSLSGPLINPARKKRPLTEAELEERRQKRQAAAAKRAKLQEERK). Positions 608–666 (NKAGVSLSGPLINPARKKRPLTEAELEERRQKRQAAAAKRAKLQEERKKQQEELNYKKK) are required for ATPase activity. One can recognise a Macro domain in the interval 697–870 (HVSFSSTDSD…IFTSIYYYRR (174 aa)). Positions 877 to 907 (VSSTASTTTPSSSKPAASSPSESPHSSSPPA) are enriched in low complexity. Residues 877–929 (VSSTASTTTPSSSKPAASSPSESPHSSSPPANREGLTKSAELSTTSHEGPGAP) form a disordered region. In terms of domain architecture, BRCT spans 930–1023 (GLADFMRGVH…RKVSVSKYVI (94 aa)).

This sequence belongs to the SNF2/RAD54 helicase family. Interacts with nucleosomes; interacts with the acidic patch of histones.

It is found in the nucleus. It localises to the chromosome. The enzyme catalyses ATP + H2O = ADP + phosphate + H(+). Adopts an inactive conformation in absence of DNA damage. Binding to poly-ADP-ribosylated histones activates the ATP-dependent chromatin remodeler activity. ATP-dependent chromatin remodeler that mediates chromatin-remodeling following DNA damage. Recruited to DNA damage sites through interaction with poly-ADP-ribose: specifically recognizes and binds histones that are poly-ADP-ribosylated on serine residues in response to DNA damage. Poly-ADP-ribose-binding activates the ATP-dependent chromatin remodeler activity, thereby regulating chromatin during DNA repair. Catalyzes nucleosome sliding away from DNA breaks in an ATP-dependent manner. The sequence is that of Chromodomain-helicase-DNA-binding protein 1-like (chd1l) from Danio rerio (Zebrafish).